We begin with the raw amino-acid sequence, 125 residues long: Small ribosomal subunit protein uS12c (125 aa).

It belongs to the universal ribosomal protein uS12 family. In terms of assembly, part of the 30S ribosomal subunit.

The protein localises to the plastid. Its subcellular location is the chloroplast. Its function is as follows. With S4 and S5 plays an important role in translational accuracy. Located at the interface of the 30S and 50S subunits. In Tupiella akineta (Green alga), this protein is Small ribosomal subunit protein uS12c (rps12).